A 404-amino-acid chain; its full sequence is Sodium/glutamate symporter (404 aa).

11 helical membrane passes run 5 to 25 (FSTYETLALASLVLLLGYFLV), 33 to 53 (TFNIPEPVVGGFIVAIGLLIW), 69 to 89 (TTMMLVFFTSIGLSANFSRLI), 95 to 115 (LVVFLFIAALLIFGQNVIGIA), 161 to 181 (IAIACATFGLVFGGIIGGPVA), 219 to 239 (SLIETIAMISVCLLIGQYLDV), 245 to 265 (ALQLPTFVWCLFTGVIVRNIL), 277 to 297 (AIDVLGSVGLSIFLAIALMSL), 307 to 327 (IDVLIVLAIQVAFMAAFAIFI), 338 to 358 (AVVLSAGHCGFGLGATPTAIA), and 373 to 393 (AFLIVPMVGAFFIDLINAALL).

The protein belongs to the glutamate:Na(+) symporter (ESS) (TC 2.A.27) family.

It is found in the cell inner membrane. Catalyzes the sodium-dependent transport of glutamate. The chain is Sodium/glutamate symporter from Haemophilus influenzae (strain ATCC 51907 / DSM 11121 / KW20 / Rd).